Here is a 415-residue protein sequence, read N- to C-terminus: Levansucrase LscA (415 aa).

Residues W45, D46, A132, R202, and D203 each contribute to the sucrose site. The Nucleophile role is filled by D46. E287 serves as the catalytic Proton donor/acceptor.

This sequence belongs to the glycosyl hydrolase 68 family.

The protein resides in the periplasm. The catalysed reaction is [6)-beta-D-fructofuranosyl-(2-&gt;](n) alpha-D-glucopyranoside + sucrose = [6)-beta-D-fructofuranosyl-(2-&gt;](n+1) alpha-D-glucopyranoside + D-glucose. Functionally, catalyzes the synthesis of levan, a fructose polymer, by transferring the fructosyl moiety from sucrose to a growing acceptor molecule. LscA encodes a functional enzyme in vitro, when expressed in E.coli under control of the vector-based lactose promoter (Plac), and it can restore levan production to the lscB-lscC double mutant. However, lscA is not expressed in P.savastanoi pv. glycinea PG4180 under standard conditions. It could be an ancestral Lsc variant in P.syringae. In Pseudomonas savastanoi pv. glycinea (Pseudomonas syringae pv. glycinea), this protein is Levansucrase LscA.